The chain runs to 252 residues: MNILLTNDDGIEAEGINTLAELLSKYHNVTMVAPENQRSASSHSITIYEPIIVKQVKKPYNVEAYSISGTPADCVRVALDKLVPDNIDMVISGINKGLNIGNDILYSGTVSAAIEGSMYKVPSMAVSAQFIKNKKENYKIAAKYALDMLNRLKKEDLKNDVVLNLNIPFCSEEEIKGIKVCKVGNKIFNTRFSEEIDEEGNKILKLEGDINEDIYDGTDVYYIRNKYVTLTPLHYDLTNFNILEETEQLFLS.

4 residues coordinate a divalent metal cation: Asp8, Asp9, Ser39, and Asn95.

Belongs to the SurE nucleotidase family. A divalent metal cation is required as a cofactor.

The protein resides in the cytoplasm. It catalyses the reaction a ribonucleoside 5'-phosphate + H2O = a ribonucleoside + phosphate. In terms of biological role, nucleotidase that shows phosphatase activity on nucleoside 5'-monophosphates. The polypeptide is 5'-nucleotidase SurE (Clostridium botulinum (strain 657 / Type Ba4)).